The chain runs to 348 residues: MGPRARPALLLLMLLQTAVLQGRLLRSHSLHYLFMGASEQDLGLSLFEALGYVDDQLFVFYDHESRRVEPRTPWVSSRISSQMWLQLSQSLKGWDHMFTVDFWTIMENHNHSKESHTLQVILGCEMQEDNSTEGYWKYGYDGQDHLEFCPDTLDWRAAEPRAWPTKLEWERHKIRARQNRAYLERDCPAQLQQLLELGRGVLDQQVPPLVKVTHHVTSSVTTLRCRALNYYPQNITMKWLKDKQPMDAKEFEPKDVLPNGDGTYQGWITLAVPPGEEQRYTCQVEHPGLDQPLIVIWEPSPSGTLVIGVISGIAVFVVILFIGILFIILRKRQGSRGAMGHYVLAERE.

A signal peptide spans 1 to 22 (MGPRARPALLLLMLLQTAVLQG). Residues 23–114 (RLLRSHSLHY…IMENHNHSKE (92 aa)) are alpha-1. Over 23-306 (RLLRSHSLHY…WEPSPSGTLV (284 aa)) the chain is Extracellular. N-linked (GlcNAc...) asparagine glycans are attached at residues Asn-110, Asn-130, and Asn-234. The segment at 115–205 (SHTLQVILGC…ELGRGVLDQQ (91 aa)) is alpha-2. Disulfide bonds link Cys-124/Cys-187 and Cys-225/Cys-282. An alpha-3 region spans residues 206–297 (VPPLVKVTHH…GLDQPLIVIW (92 aa)). Residues 207-298 (PPLVKVTHHV…LDQPLIVIWE (92 aa)) enclose the Ig-like C1-type domain. A connecting peptide region spans residues 298–306 (EPSPSGTLV). Residues 307 to 330 (IGVISGIAVFVVILFIGILFIILR) traverse the membrane as a helical segment. The Cytoplasmic portion of the chain corresponds to 331–348 (KRQGSRGAMGHYVLAERE).

The protein belongs to the MHC class I family. In terms of assembly, binds TFR through the extracellular domain in a pH-dependent manner. In terms of tissue distribution, expressed in all tissues tested except brain.

The protein localises to the cell membrane. Binds to transferrin receptor (TFR) and reduces its affinity for iron-loaded transferrin. In Homo sapiens (Human), this protein is Hereditary hemochromatosis protein (HFE).